The sequence spans 302 residues: Sulfate adenylyltransferase subunit 2 (302 aa).

This sequence belongs to the PAPS reductase family. CysD subfamily. In terms of assembly, heterodimer composed of CysD, the smaller subunit, and CysN.

The catalysed reaction is sulfate + ATP + H(+) = adenosine 5'-phosphosulfate + diphosphate. The protein operates within sulfur metabolism; hydrogen sulfide biosynthesis; sulfite from sulfate: step 1/3. With CysN forms the ATP sulfurylase (ATPS) that catalyzes the adenylation of sulfate producing adenosine 5'-phosphosulfate (APS) and diphosphate, the first enzymatic step in sulfur assimilation pathway. APS synthesis involves the formation of a high-energy phosphoric-sulfuric acid anhydride bond driven by GTP hydrolysis by CysN coupled to ATP hydrolysis by CysD. This chain is Sulfate adenylyltransferase subunit 2, found in Parabacteroides distasonis (strain ATCC 8503 / DSM 20701 / CIP 104284 / JCM 5825 / NCTC 11152).